The sequence spans 332 residues: Lipoyl synthase (332 aa).

[4Fe-4S] cluster contacts are provided by Cys74, Cys79, Cys85, Cys100, Cys104, Cys107, and Ser314. In terms of domain architecture, Radical SAM core spans Cys85 to Ser303.

This sequence belongs to the radical SAM superfamily. Lipoyl synthase family. [4Fe-4S] cluster serves as cofactor.

It is found in the cytoplasm. The catalysed reaction is [[Fe-S] cluster scaffold protein carrying a second [4Fe-4S](2+) cluster] + N(6)-octanoyl-L-lysyl-[protein] + 2 oxidized [2Fe-2S]-[ferredoxin] + 2 S-adenosyl-L-methionine + 4 H(+) = [[Fe-S] cluster scaffold protein] + N(6)-[(R)-dihydrolipoyl]-L-lysyl-[protein] + 4 Fe(3+) + 2 hydrogen sulfide + 2 5'-deoxyadenosine + 2 L-methionine + 2 reduced [2Fe-2S]-[ferredoxin]. The protein operates within protein modification; protein lipoylation via endogenous pathway; protein N(6)-(lipoyl)lysine from octanoyl-[acyl-carrier-protein]: step 2/2. Catalyzes the radical-mediated insertion of two sulfur atoms into the C-6 and C-8 positions of the octanoyl moiety bound to the lipoyl domains of lipoate-dependent enzymes, thereby converting the octanoylated domains into lipoylated derivatives. The protein is Lipoyl synthase of Verminephrobacter eiseniae (strain EF01-2).